Reading from the N-terminus, the 156-residue chain is Transcriptional repressor NrdR (156 aa).

A zinc finger spans residues 3–34 (CPFCGSMDTRVLDSRPTLDGTAIRRRRECSSC). Positions 49 to 139 (VLVVKKDGRR…VYRDFREVDQ (91 aa)) constitute an ATP-cone domain.

It belongs to the NrdR family. The cofactor is Zn(2+).

Negatively regulates transcription of bacterial ribonucleotide reductase nrd genes and operons by binding to NrdR-boxes. In Thermotoga maritima (strain ATCC 43589 / DSM 3109 / JCM 10099 / NBRC 100826 / MSB8), this protein is Transcriptional repressor NrdR.